Here is an 85-residue protein sequence, read N- to C-terminus: Putative membrane protein insertion efficiency factor (85 aa).

The protein belongs to the UPF0161 family.

The protein localises to the cell inner membrane. Functionally, could be involved in insertion of integral membrane proteins into the membrane. The polypeptide is Putative membrane protein insertion efficiency factor (Escherichia coli O6:H1 (strain CFT073 / ATCC 700928 / UPEC)).